The primary structure comprises 420 residues: Methionine aminopeptidase 2 (420 aa).

Residues 1 to 48 form a disordered region; the sequence is MSDAIAKDAVNTSSEKEPVSATPELKTSGSPDAAVSSGDKKKKKKKKK. Histidine 172 contributes to the substrate binding site. A divalent metal cation is bound by residues aspartate 192, aspartate 203, and histidine 272. Position 280 (histidine 280) interacts with substrate. Glutamate 305 and glutamate 401 together coordinate a divalent metal cation.

Belongs to the peptidase M24A family. Methionine aminopeptidase eukaryotic type 2 subfamily. The cofactor is Co(2+). Requires Zn(2+) as cofactor. Mn(2+) serves as cofactor. It depends on Fe(2+) as a cofactor.

The protein localises to the cytoplasm. It carries out the reaction Release of N-terminal amino acids, preferentially methionine, from peptides and arylamides.. In terms of biological role, cotranslationally removes the N-terminal methionine from nascent proteins. The N-terminal methionine is often cleaved when the second residue in the primary sequence is small and uncharged (Met-Ala-, Cys, Gly, Pro, Ser, Thr, or Val). This chain is Methionine aminopeptidase 2, found in Lachancea thermotolerans (strain ATCC 56472 / CBS 6340 / NRRL Y-8284) (Yeast).